Consider the following 467-residue polypeptide: Venom prothrombin activator omicarin-C catalytic subunit (467 aa).

The N-terminal stretch at 1-20 (MAPQLLLCLILTFLWSLPEA) is a signal peptide. A propeptide spanning residues 21-40 (ESNVFLKSKVANRFLQRTKR) is cleaved from the precursor. A Gla domain is found at 41 to 86 (ANSLFEEFRSGNIERECIEERCSKEEAREVFEDDEKTETFWNVYVD). 4-carboxyglutamate occurs at positions 46, 47, 54, 56, 59, 60, 65, 66, 69, 72, and 75. A disulfide bridge links Cys57 with Cys62. The EGF-like 1; calcium-binding domain maps to 86–122 (DGDQCSSNPCHYRGTCKDGIGSYTCTCLFGYEGKNCE). 11 disulfides stabilise this stretch: Cys90-Cys101, Cys95-Cys110, Cys112-Cys121, Cys129-Cys140, Cys136-Cys149, Cys151-Cys164, Cys172-Cys329, Cys216-Cys221, Cys236-Cys252, Cys377-Cys391, and Cys402-Cys430. The O-linked (Hex...) serine glycan is linked to Ser92. One can recognise an EGF-like 2 domain in the interval 129–164 (CRVDNGNCWHFCKPVQNDIQCSCAEGYLLGEDGHSC). A propeptide spans 182–209 (REASLPDFVQSQNATLLKKSDNPSPDIR) (activation peptide). In terms of domain architecture, Peptidase S1 spans 210–454 (IVNGMDCKLG…FILWIKRIMR (245 aa)). The active-site Charge relay system is the His251. Residue Asn254 is glycosylated (N-linked (GlcNAc...) asparagine). Asp309 functions as the Charge relay system in the catalytic mechanism. The active-site Charge relay system is Ser406.

Belongs to the peptidase S1 family. Snake venom subfamily. Heterodimer of a light and a heavy chains; disulfide-linked. Is associated with omicarin-C non-catalytic subunit (AC Q58L90) in a non-covalent manner. In terms of processing, gamma-carboxyglutamate residues are formed by vitamin K dependent carboxylation. These residues are essential for the binding of calcium. As to expression, expressed by the venom gland.

The protein localises to the secreted. It carries out the reaction Selective cleavage of Arg-|-Thr and then Arg-|-Ile bonds in prothrombin to form thrombin.. With respect to regulation, activated by calcium and negatively charged phospholipids. Its function is as follows. Snake prothrombin activator that attacks the hemostatic system of prey. This catalytic subunit is functionally similar to blood coagulation factor Xa. It requires a non-catalytic subunit present in the venom, which is similar to coagulation factor Va, to be fully active. In Oxyuranus microlepidotus (Inland taipan), this protein is Venom prothrombin activator omicarin-C catalytic subunit.